A 292-amino-acid polypeptide reads, in one-letter code: RNA 5'-monophosphate methyltransferase (292 aa).

The interval 1–22 (MAASTEQATGGVEKTAAEEKPR) is disordered. S-adenosyl-L-methionine-binding positions include R46, N76, D110, 135-136 (DF), and M164. Residues 53–274 (ELLRRLFPQS…KQATETHPIP (222 aa)) form the Bin3-type SAM domain.

The protein belongs to the methyltransferase superfamily. As to quaternary structure, interacts with DICER1; the interaction may be mediated by RNA.

Its subcellular location is the cytoplasm. The enzyme catalyses a 5'-end 5'-phospho-ribonucleoside-RNA + S-adenosyl-L-methionine = a 5'-end (5'-methylphospho)-ribonucleoside-RNA + S-adenosyl-L-homocysteine. It carries out the reaction a 5'-end 5'-phospho-ribonucleoside-RNA + 2 S-adenosyl-L-methionine = a 5'-end (5'-bismethylphospho)-ribonucleoside-RNA + 2 S-adenosyl-L-homocysteine. O-methyltransferase that specifically monomethylates 5'-monophosphate of cytoplasmic histidyl tRNA (tRNA(His)), acting as a capping enzyme by protecting tRNA(His) from cleavage by DICER1. Also able, with less efficiently, to methylate the 5' monophosphate of a subset of pre-miRNAs, acting as a negative regulator of miRNA processing. The 5' monophosphate of pre-miRNAs is recognized by DICER1 and is required for pre-miRNAs processing: methylation at this position reduces the processing of pre-miRNAs by DICER1. Was also reported to mediate dimethylation of pre-miR-145; however dimethylation cannot be reproduced by another group which observes a monomethylation of pre-miR-145. In Bos taurus (Bovine), this protein is RNA 5'-monophosphate methyltransferase (BCDIN3D).